The sequence spans 311 residues: MQELRFVLIVVGALAIMALLFHGLWTSKKEGKAKFGDKPLSKLDLGESEPKESEMYVAPEDDYEIIRKERKEPAFEDEKPFSTSGVIGDPLIDDLHSGQDKENKFSQPKFDDDITVAEAEAAASIEQDAPAWVEQPQEIDEPLTHHPDEIDAFSGEETIVELDEPISKTVEPELQVIVLNVHCAGDSPFVGTKLFDSMQQNGLVYGEMDIFHRHLDMSGTGKVLFSVANMMHPGTLKHDDPAEFSTKGISFFMTLPCYGEADQNFNLMLKTAQKIADDLGGNVLDDKRNLMTPDRLAGYRRQIVEFKAANA.

The Periplasmic segment spans residues Met-1–Arg-5. Residues Phe-6–Thr-26 traverse the membrane as a helical segment. Over Ser-27–Ala-311 the chain is Cytoplasmic. Residues Lys-32 to Glu-54 are compositionally biased toward basic and acidic residues. The interval Lys-32–Glu-60 is disordered.

It belongs to the ZipA family. In terms of assembly, interacts with FtsZ via their C-terminal domains.

The protein resides in the cell inner membrane. In terms of biological role, essential cell division protein that stabilizes the FtsZ protofilaments by cross-linking them and that serves as a cytoplasmic membrane anchor for the Z ring. Also required for the recruitment to the septal ring of downstream cell division proteins. The polypeptide is Cell division protein ZipA (Vibrio vulnificus (strain YJ016)).